A 541-amino-acid chain; its full sequence is MHTLIKGVLEEILEEEVIIEYPKDREHGHYATPIAFNLAKVFKKSPLVIAEELALKISTHKKTQGLFDSVVACKGYINFTLSLGFLERFTQKALELKEQFGSQIKSERSQKIFLEFVSANPTGPLHIGHARGAVFGDSLAKIARFLGHEVLCEYYVNDMGSQIRLLGLSVWLAYREHVLKESVTYPEVFYKGEYIIEIAKKANNDLEPSLFKENEETIIGVLSGYAKDLMLLEIKDNLDALGIHFDSYASEKEVFKHKDAVFERLEKANALYEKDSKIWLKSSLYQDESDRVLVKEDKSYTYLTGDVIYHDKKFKQDYTKYINIWGADHHGYIARVKASLEFLGYDSNKLEVLLAQMVRLLKDNEPYKMSKRAGNFILIKDVVDDVGRDALRFIFLSKRLDTHLEFDVNTLKKQDSSNPIYYIHYANSRIHTMLEKSPFSKEEVLQTPLKNLNAEEKYLLFSALSLPKAIESSFEEYGLQKMCEYAKTLASEFHRFYNAGKILDTPKTKELLKICLMVSLSLTNAFKLLGIEIKTKISAKD.

Residues 119–129 (ANPTGPLHIGH) carry the 'HIGH' region motif.

This sequence belongs to the class-I aminoacyl-tRNA synthetase family. In terms of assembly, monomer.

The protein resides in the cytoplasm. The enzyme catalyses tRNA(Arg) + L-arginine + ATP = L-arginyl-tRNA(Arg) + AMP + diphosphate. This is Arginine--tRNA ligase from Helicobacter pylori (strain G27).